The sequence spans 164 residues: Crossover junction endodeoxyribonuclease RuvC (164 aa).

Catalysis depends on residues Asp7, Glu67, and Asp140. 3 residues coordinate Mg(2+): Asp7, Glu67, and Asp140.

It belongs to the RuvC family. In terms of assembly, homodimer which binds Holliday junction (HJ) DNA. The HJ becomes 2-fold symmetrical on binding to RuvC with unstacked arms; it has a different conformation from HJ DNA in complex with RuvA. In the full resolvosome a probable DNA-RuvA(4)-RuvB(12)-RuvC(2) complex forms which resolves the HJ. The cofactor is Mg(2+).

The protein localises to the cytoplasm. It carries out the reaction Endonucleolytic cleavage at a junction such as a reciprocal single-stranded crossover between two homologous DNA duplexes (Holliday junction).. Functionally, the RuvA-RuvB-RuvC complex processes Holliday junction (HJ) DNA during genetic recombination and DNA repair. Endonuclease that resolves HJ intermediates. Cleaves cruciform DNA by making single-stranded nicks across the HJ at symmetrical positions within the homologous arms, yielding a 5'-phosphate and a 3'-hydroxyl group; requires a central core of homology in the junction. The consensus cleavage sequence is 5'-(A/T)TT(C/G)-3'. Cleavage occurs on the 3'-side of the TT dinucleotide at the point of strand exchange. HJ branch migration catalyzed by RuvA-RuvB allows RuvC to scan DNA until it finds its consensus sequence, where it cleaves and resolves the cruciform DNA. This is Crossover junction endodeoxyribonuclease RuvC from Alkaliphilus oremlandii (strain OhILAs) (Clostridium oremlandii (strain OhILAs)).